The following is a 1068-amino-acid chain: Phosphatidylinositol 4,5-bisphosphate 3-kinase catalytic subunit alpha isoform (1068 aa).

The region spanning 16 to 105 (MPPRILVECL…QPFLKVIEPV (90 aa)) is the PI3K-ABD domain. A PI3K-RBD domain is found at 187–289 (KGQIIVVIWV…GRMPNLMLMA (103 aa)). The region spanning 330-487 (INSALRIKIL…DWFSSVVKFP (158 aa)) is the C2 PI3K-type domain. Residues 517 to 694 (LARDNELREN…GLLLESYCRA (178 aa)) enclose the PIK helical domain. Residues 765-1051 (RLEECRIMSS…QMNDAHHGGW (287 aa)) form the PI3K/PI4K catalytic domain. The interval 771-777 (IMSSAKR) is G-loop. Positions 912–920 (GIGDRHNSN) are catalytic loop. The activation loop stretch occupies residues 931 to 957 (HIDFGHFLDHKKKKFGYKRERVPFVLT).

Belongs to the PI3/PI4-kinase family. Heterodimer of a catalytic subunit PIK3CA and a p85 regulatory subunit (PIK3R1, PIK3R2 or PIK3R3). Interacts with IRS1 in nuclear extracts. Interacts with RUFY3. Interacts with RASD2. Interacts with APPL1. Interacts with HRAS and KRAS. Interaction with HRAS/KRAS is required for PI3K pathway signaling and cell proliferation stimulated by EGF and FGF2. Interacts with FAM83B; activates the PI3K/AKT signaling cascade.

The catalysed reaction is a 1,2-diacyl-sn-glycero-3-phospho-(1D-myo-inositol-4,5-bisphosphate) + ATP = a 1,2-diacyl-sn-glycero-3-phospho-(1D-myo-inositol-3,4,5-trisphosphate) + ADP + H(+). It catalyses the reaction a 1,2-diacyl-sn-glycero-3-phospho-(1D-myo-inositol) + ATP = a 1,2-diacyl-sn-glycero-3-phospho-(1D-myo-inositol-3-phosphate) + ADP + H(+). The enzyme catalyses L-seryl-[protein] + ATP = O-phospho-L-seryl-[protein] + ADP + H(+). It carries out the reaction 1,2-dioctanoyl-sn-glycero-3-phospho-(1D-myo-inositol-4,5-bisphosphate) + ATP = 1,2-dioctanoyl-sn-glycero-3-phospho-(1D-myo-inositol-3,4,5-trisphosphate) + ADP + H(+). The catalysed reaction is 1-octadecanoyl-2-(5Z,8Z,11Z,14Z)-eicosatetraenoyl-sn-glycero-3-phospho-1D-myo-inositol 4,5-bisphosphate + ATP = 1-octadecanoyl-2-(5Z,8Z,11Z,14Z-eicosatetraenoyl)-sn-glycero-3-phospho-(1D-myo-inositol 3,4,5-triphosphate) + ADP + H(+). The protein operates within phospholipid metabolism; phosphatidylinositol phosphate biosynthesis. Phosphoinositide-3-kinase (PI3K) phosphorylates phosphatidylinositol (PI) and its phosphorylated derivatives at position 3 of the inositol ring to produce 3-phosphoinositides. Uses ATP and PtdIns(4,5)P2 (phosphatidylinositol 4,5-bisphosphate) to generate phosphatidylinositol 3,4,5-trisphosphate (PIP3). PIP3 plays a key role by recruiting PH domain-containing proteins to the membrane, including AKT1 and PDPK1, activating signaling cascades involved in cell growth, survival, proliferation, motility and morphology. Participates in cellular signaling in response to various growth factors. Involved in the activation of AKT1 upon stimulation by receptor tyrosine kinases ligands such as EGF, insulin, IGF1, VEGFA and PDGF. Involved in signaling via insulin-receptor substrate (IRS) proteins. Essential in endothelial cell migration during vascular development through VEGFA signaling, possibly by regulating RhoA activity. Required for lymphatic vasculature development, possibly by binding to RAS and by activation by EGF and FGF2, but not by PDGF. Regulates invadopodia formation through the PDPK1-AKT1 pathway. Participates in cardiomyogenesis in embryonic stem cells through a AKT1 pathway. Participates in vasculogenesis in embryonic stem cells through PDK1 and protein kinase C pathway. Also has serine-protein kinase activity: phosphorylates PIK3R1 (p85alpha regulatory subunit), EIF4EBP1 and HRAS. Plays a role in the positive regulation of phagocytosis and pinocytosis. In Mus musculus (Mouse), this protein is Phosphatidylinositol 4,5-bisphosphate 3-kinase catalytic subunit alpha isoform (Pik3ca).